Here is a 212-residue protein sequence, read N- to C-terminus: MAIGLIGRKVGMTRIFTEDGTSIPVTVIEIAGNRVTQVKTLETDGYRALQVTTGTKKANRITKAEAGHFAKGGVEAGRGLWEMRLADGEGEGIEVGAEINVDIFADTVKVDVTGQSKGKGFQGGVKRWNFRTQDMTHGNSLAHRSNGSIGQNQTPGRVFKGKKMSGHMGAEQVTTQNLHVVRVDAERNLLLVRGAVPGATNGDLIIKPAVKA.

At Gln-153 the chain carries N5-methylglutamine.

It belongs to the universal ribosomal protein uL3 family. Part of the 50S ribosomal subunit. Forms a cluster with proteins L14 and L19. Post-translationally, methylated by PrmB.

Functionally, one of the primary rRNA binding proteins, it binds directly near the 3'-end of the 23S rRNA, where it nucleates assembly of the 50S subunit. The polypeptide is Large ribosomal subunit protein uL3 (Shewanella frigidimarina (strain NCIMB 400)).